Reading from the N-terminus, the 1430-residue chain is Gag-Pol polyprotein (1430 aa).

The N-myristoyl glycine; by host moiety is linked to residue Gly2. The interval 7–31 is interaction with Gp41; it reads VLSGGKLDAWEKIRLRPGGKKKYKL. The segment at 8-43 is interaction with host CALM1; sequence LSGGKLDAWEKIRLRPGGKKKYKLKHLVWASRELER. The segment at 12 to 19 is interaction with host AP3D1; it reads KLDAWEKI. The interval 14–33 is interaction with membrane phosphatidylinositol 4,5-bisphosphate and RNA; the sequence is DAWEKIRLRPGGKKKYKLKH. The Nuclear export signal signature appears at 16–22; it reads WEKIRLR. The Nuclear localization signal signature appears at 26–32; that stretch reads KKKYKLK. Residues 73-77 are interaction with membrane phosphatidylinositol 4,5-bisphosphate; the sequence is EEIKS. Tyr128 carries the phosphotyrosine; by host modification. The interaction with human PPIA/CYPA and NUP153 stretch occupies residues 185-223; it reads NTVGGHQAAMQMLKDTINDEAAEWDRLHPVHAGPIPPGQ. The segment at 273-359 is dimerization/Multimerization of capsid protein p24; that stretch reads YSPVSILDIR…GGPSHKARIL (87 aa). 2 CCHC-type zinc fingers span residues 385–402 and 406–423; these read VKCFNCGKEGHIARNCRA and KGCWKCGKEGHQMKDCTE. The interval 439 to 480 is disordered; sequence EAREFSSEQTRANSPTSRELRVRGGDNPLSEAGDQRQGTEPS. The segment covering 445 to 455 has biased composition (polar residues); sequence SEQTRANSPTS. Positions 484–488 are dimerization of protease; the sequence is PQITL. One can recognise a Peptidase A2 domain in the interval 503 to 572; sequence REALLDTGAD…TPVNIIGRNL (70 aa). Residue Asp508 is the For protease activity; shared with dimeric partner of the active site. Dimerization of protease stretches follow at residues 532 to 538 and 571 to 583; these read GIGGFIK and NLLTQIGCTLNFP. The region spanning 626 to 816 is the Reverse transcriptase domain; that stretch reads EGKISKIGPE…PPFLWMGYEL (191 aa). Mg(2+) contacts are provided by Asp692, Asp767, and Asp768. The segment at 809–817 is RT 'primer grip'; sequence FLWMGYELH. Positions 980-996 match the Tryptophan repeat motif motif; it reads WETWWTEYWQATWIPEW. In terms of domain architecture, RNase H type-1 spans 1016–1139; the sequence is IVGAETFYVD…VDKLVSAGIR (124 aa). Asp1025, Glu1060, Asp1080, and Asp1131 together coordinate Mg(2+). An Integrase-type zinc finger spans residues 1145-1186; that stretch reads DGIDKAQEEHEKYHNNWRAMASDFNLPPIVAKEIVASCDKCQ. Residues His1154, His1158, Cys1182, and Cys1185 each coordinate Zn(2+). In terms of domain architecture, Integrase catalytic spans 1196 to 1346; the sequence is VDCSPGIWQL…SAGERIVDII (151 aa). Residues Asp1206, Asp1258, and Glu1294 each coordinate Mg(2+). The segment at residues 1365 to 1412 is a DNA-binding region (integrase-type); the sequence is FRVYYRDSREPIWKGPAKLLWKGEGAVVIQDNSEIKVVPRRKAKIIRD.

In terms of assembly, homotrimer; further assembles as hexamers of trimers. Interacts with gp41 (via C-terminus). Interacts with host CALM1; this interaction induces a conformational change in the Matrix protein, triggering exposure of the myristate group. Interacts with host AP3D1; this interaction allows the polyprotein trafficking to multivesicular bodies during virus assembly. Part of the pre-integration complex (PIC) which is composed of viral genome, matrix protein, Vpr and integrase. Homodimer; the homodimer further multimerizes as homohexamers or homopentamers. Interacts with human PPIA/CYPA; This interaction stabilizes the capsid. Interacts with human NUP153. Interacts with host PDZD8; this interaction stabilizes the capsid. Interacts with monkey TRIM5; this interaction destabilizes the capsid. As to quaternary structure, homodimer, whose active site consists of two apposed aspartic acid residues. In terms of assembly, heterodimer of p66 RT and p51 RT (RT p66/p51). Heterodimerization of RT is essential for DNA polymerase activity. The overall folding of the subdomains is similar in p66 RT and p51 RT but the spatial arrangements of the subdomains are dramatically different. Homotetramer; may further associate as a homohexadecamer. Part of the pre-integration complex (PIC) which is composed of viral genome, matrix protein, Vpr and integrase. Interacts with human SMARCB1/INI1 and human PSIP1/LEDGF isoform 1. Interacts with human KPNA3; this interaction might play a role in nuclear import of the pre-integration complex. Interacts with human NUP153; this interaction might play a role in nuclear import of the pre-integration complex. The cofactor is Mg(2+). Specific enzymatic cleavages by the viral protease yield mature proteins. The protease is released by autocatalytic cleavage. The polyprotein is cleaved during and after budding, this process is termed maturation. Proteolytic cleavage of p66 RT removes the RNase H domain to yield the p51 RT subunit. Nucleocapsid protein p7 might be further cleaved after virus entry. Post-translationally, tyrosine phosphorylated presumably in the virion by a host kinase. Phosphorylation is apparently not a major regulator of membrane association. In terms of processing, phosphorylated possibly by host MAPK1; this phosphorylation is necessary for Pin1-mediated virion uncoating. Methylated by host PRMT6, impairing its function by reducing RNA annealing and the initiation of reverse transcription.

The protein localises to the host cell membrane. The protein resides in the host endosome. It is found in the host multivesicular body. It localises to the virion membrane. Its subcellular location is the host nucleus. The protein localises to the host cytoplasm. The protein resides in the virion. It catalyses the reaction Specific for a P1 residue that is hydrophobic, and P1' variable, but often Pro.. The enzyme catalyses Endohydrolysis of RNA in RNA/DNA hybrids. Three different cleavage modes: 1. sequence-specific internal cleavage of RNA. Human immunodeficiency virus type 1 and Moloney murine leukemia virus enzymes prefer to cleave the RNA strand one nucleotide away from the RNA-DNA junction. 2. RNA 5'-end directed cleavage 13-19 nucleotides from the RNA end. 3. DNA 3'-end directed cleavage 15-20 nucleotides away from the primer terminus.. It carries out the reaction 3'-end directed exonucleolytic cleavage of viral RNA-DNA hybrid.. The catalysed reaction is DNA(n) + a 2'-deoxyribonucleoside 5'-triphosphate = DNA(n+1) + diphosphate. Its activity is regulated as follows. Protease: The viral protease is inhibited by many synthetic protease inhibitors (PIs), such as amprenavir, atazanavir, indinavir, loprinavir, nelfinavir, ritonavir and saquinavir. Use of protease inhibitors in tritherapy regimens permit more ambitious therapeutic strategies. Reverse transcriptase/ribonuclease H: RT can be inhibited either by nucleoside RT inhibitors (NRTIs) or by non nucleoside RT inhibitors (NNRTIs). NRTIs act as chain terminators, whereas NNRTIs inhibit DNA polymerization by binding a small hydrophobic pocket near the RT active site and inducing an allosteric change in this region. Classical NRTIs are abacavir, adefovir (PMEA), didanosine (ddI), lamivudine (3TC), stavudine (d4T), tenofovir (PMPA), zalcitabine (ddC), and zidovudine (AZT). Classical NNRTIs are atevirdine (BHAP U-87201E), delavirdine, efavirenz (DMP-266), emivirine (I-EBU), and nevirapine (BI-RG-587). The tritherapies used as a basic effective treatment of AIDS associate two NRTIs and one NNRTI. Mediates, with Gag polyprotein, the essential events in virion assembly, including binding the plasma membrane, making the protein-protein interactions necessary to create spherical particles, recruiting the viral Env proteins, and packaging the genomic RNA via direct interactions with the RNA packaging sequence (Psi). Gag-Pol polyprotein may regulate its own translation, by the binding genomic RNA in the 5'-UTR. At low concentration, the polyprotein would promote translation, whereas at high concentration, the polyprotein would encapsidate genomic RNA and then shut off translation. In terms of biological role, targets the polyprotein to the plasma membrane via a multipartite membrane-binding signal, that includes its myristoylated N-terminus. Matrix protein is part of the pre-integration complex. Implicated in the release from host cell mediated by Vpu. Binds to RNA. Its function is as follows. Forms the conical core that encapsulates the genomic RNA-nucleocapsid complex in the virion. Most core are conical, with only 7% tubular. The core is constituted by capsid protein hexamer subunits. The core is disassembled soon after virion entry. Host restriction factors such as TRIM5-alpha or TRIMCyp bind retroviral capsids and cause premature capsid disassembly, leading to blocks in reverse transcription. Capsid restriction by TRIM5 is one of the factors which restricts HIV-1 to the human species. Host PIN1 apparently facilitates the virion uncoating. On the other hand, interactions with PDZD8 or CYPA stabilize the capsid. Functionally, encapsulates and protects viral dimeric unspliced genomic RNA (gRNA). Binds these RNAs through its zinc fingers. Acts as a nucleic acid chaperone which is involved in rearangement of nucleic acid secondary structure during gRNA retrotranscription. Also facilitates template switch leading to recombination. As part of the polyprotein, participates in gRNA dimerization, packaging, tRNA incorporation and virion assembly. Aspartyl protease that mediates proteolytic cleavages of Gag and Gag-Pol polyproteins during or shortly after the release of the virion from the plasma membrane. Cleavages take place as an ordered, step-wise cascade to yield mature proteins. This process is called maturation. Displays maximal activity during the budding process just prior to particle release from the cell. Also cleaves Nef and Vif, probably concomitantly with viral structural proteins on maturation of virus particles. Hydrolyzes host EIF4GI and PABP1 in order to shut off the capped cellular mRNA translation. The resulting inhibition of cellular protein synthesis serves to ensure maximal viral gene expression and to evade host immune response. Also mediates cleavage of host YTHDF3. Mediates cleavage of host CARD8, thereby activating the CARD8 inflammasome, leading to the clearance of latent HIV-1 in patient CD4(+) T-cells after viral reactivation; in contrast, HIV-1 can evade CARD8-sensing when its protease remains inactive in infected cells prior to viral budding. In terms of biological role, multifunctional enzyme that converts the viral RNA genome into dsDNA in the cytoplasm, shortly after virus entry into the cell. This enzyme displays a DNA polymerase activity that can copy either DNA or RNA templates, and a ribonuclease H (RNase H) activity that cleaves the RNA strand of RNA-DNA heteroduplexes in a partially processive 3' to 5' endonucleasic mode. Conversion of viral genomic RNA into dsDNA requires many steps. A tRNA(3)-Lys binds to the primer-binding site (PBS) situated at the 5'-end of the viral RNA. RT uses the 3' end of the tRNA primer to perform a short round of RNA-dependent minus-strand DNA synthesis. The reading proceeds through the U5 region and ends after the repeated (R) region which is present at both ends of viral RNA. The portion of the RNA-DNA heteroduplex is digested by the RNase H, resulting in a ssDNA product attached to the tRNA primer. This ssDNA/tRNA hybridizes with the identical R region situated at the 3' end of viral RNA. This template exchange, known as minus-strand DNA strong stop transfer, can be either intra- or intermolecular. RT uses the 3' end of this newly synthesized short ssDNA to perform the RNA-dependent minus-strand DNA synthesis of the whole template. RNase H digests the RNA template except for two polypurine tracts (PPTs) situated at the 5'-end and near the center of the genome. It is not clear if both polymerase and RNase H activities are simultaneous. RNase H probably can proceed both in a polymerase-dependent (RNA cut into small fragments by the same RT performing DNA synthesis) and a polymerase-independent mode (cleavage of remaining RNA fragments by free RTs). Secondly, RT performs DNA-directed plus-strand DNA synthesis using the PPTs that have not been removed by RNase H as primers. PPTs and tRNA primers are then removed by RNase H. The 3' and 5' ssDNA PBS regions hybridize to form a circular dsDNA intermediate. Strand displacement synthesis by RT to the PBS and PPT ends produces a blunt ended, linear dsDNA copy of the viral genome that includes long terminal repeats (LTRs) at both ends. Its function is as follows. Catalyzes viral DNA integration into the host chromosome, by performing a series of DNA cutting and joining reactions. This enzyme activity takes place after virion entry into a cell and reverse transcription of the RNA genome in dsDNA. The first step in the integration process is 3' processing. This step requires a complex comprising the viral genome, matrix protein, Vpr and integrase. This complex is called the pre-integration complex (PIC). The integrase protein removes 2 nucleotides from each 3' end of the viral DNA, leaving recessed CA OH's at the 3' ends. In the second step, the PIC enters cell nucleus. This process is mediated through integrase and Vpr proteins, and allows the virus to infect a non dividing cell. This ability to enter the nucleus is specific of lentiviruses, other retroviruses cannot and rely on cell division to access cell chromosomes. In the third step, termed strand transfer, the integrase protein joins the previously processed 3' ends to the 5' ends of strands of target cellular DNA at the site of integration. The 5'-ends are produced by integrase-catalyzed staggered cuts, 5 bp apart. A Y-shaped, gapped, recombination intermediate results, with the 5'-ends of the viral DNA strands and the 3' ends of target DNA strands remaining unjoined, flanking a gap of 5 bp. The last step is viral DNA integration into host chromosome. This involves host DNA repair synthesis in which the 5 bp gaps between the unjoined strands are filled in and then ligated. Since this process occurs at both cuts flanking the HIV genome, a 5 bp duplication of host DNA is produced at the ends of HIV-1 integration. Alternatively, Integrase may catalyze the excision of viral DNA just after strand transfer, this is termed disintegration. This is Gag-Pol polyprotein (gag-pol) from Homo sapiens (Human).